The following is a 247-amino-acid chain: Large ribosomal subunit protein uL30z (247 aa).

It belongs to the universal ribosomal protein uL30 family.

This Arabidopsis thaliana (Mouse-ear cress) protein is Large ribosomal subunit protein uL30z (RPL7A).